A 441-amino-acid chain; its full sequence is uncharacterized protein (441 aa).

11 helical membrane passes run 62–82 (FLSL…FEIG), 88–108 (LILT…KLFG), 112–132 (IALT…IIAL), 154–174 (ALLH…LLVV), 192–212 (WMFF…YLLY), 224–244 (ALMI…GVAS), 247–267 (ANLS…YMVC), 312–332 (IVLF…ATFA), 335–355 (ISVM…IIFL), 363–383 (QGMW…NLLL), and 399–419 (ILCS…LLYA).

The protein localises to the membrane. This is an uncharacterized protein from Schizosaccharomyces pombe (strain 972 / ATCC 24843) (Fission yeast).